A 373-amino-acid polypeptide reads, in one-letter code: tRNA-specific 2-thiouridylase MnmA (373 aa).

ATP contacts are provided by residues 12 to 19 and methionine 38; that span reads GMSGGVDS. The tract at residues 98–100 is interaction with target base in tRNA; the sequence is NPD. The Nucleophile role is filled by cysteine 103. Cysteines 103 and 200 form a disulfide. Glycine 127 contributes to the ATP binding site. The interval 150-152 is interaction with tRNA; that stretch reads KDQ. Residue cysteine 200 is the Cysteine persulfide intermediate of the active site. Residues 312–313 form an interaction with tRNA region; the sequence is RY.

The protein belongs to the MnmA/TRMU family.

The protein resides in the cytoplasm. It catalyses the reaction S-sulfanyl-L-cysteinyl-[protein] + uridine(34) in tRNA + AH2 + ATP = 2-thiouridine(34) in tRNA + L-cysteinyl-[protein] + A + AMP + diphosphate + H(+). In terms of biological role, catalyzes the 2-thiolation of uridine at the wobble position (U34) of tRNA, leading to the formation of s(2)U34. This chain is tRNA-specific 2-thiouridylase MnmA, found in Streptococcus pneumoniae (strain P1031).